We begin with the raw amino-acid sequence, 142 residues long: DNA-directed RNA polymerase II subunit RPB4 (142 aa).

The protein belongs to the eukaryotic RPB4 RNA polymerase subunit family. As to quaternary structure, component of the RNA polymerase II (Pol II) core complex consisting of 12 subunits: a ten-subunit catalytic core composed of POLR2A/RPB1, POLR2B/RPB2, POLR2C/RPB3, POLR2I/RPB9, POLR2J/RPB11, POLR2E/RPABC1, POLR2F/RPABC2, POLR2H/RPABC3, POLR2K/RPABC4 and POLR2L/RPABC5 and a mobile stalk composed of two subunits POLR2D/RPB4 and POLR2G/RPB7, protruding from the core and functioning primarily in transcription initiation. Part of Pol II(G) complex, in which Pol II core associates with an additional subunit POLR2M; unlike conventional Pol II, Pol II(G) functions as a transcriptional repressor. Part of Pol II pre-initiation complex (PIC), in which Pol II core assembles with Mediator, general transcription factors and other specific initiation factors including GTF2E1, GTF2E2, GTF2F1, GTF2F2, TCEA1, ERCC2, ERCC3, GTF2H2, GTF2H3, GTF2H4, GTF2H5, GTF2A1, GTF2A2, GTF2B and TBP; this large multi-subunit PIC complex mediates DNA unwinding and targets Pol II core to the transcription start site where the first phosphodiester bond forms.

Its subcellular location is the nucleus. Functionally, core component of RNA polymerase II (Pol II), a DNA-dependent RNA polymerase which synthesizes mRNA precursors and many functional non-coding RNAs using the four ribonucleoside triphosphates as substrates. Pol II is the central component of the basal RNA polymerase II transcription machinery. It is composed of mobile elements that move relative to each other. POLR2D/RPB4 is part of a subcomplex with POLR2G/RPB7 that binds to a pocket formed by POLR2A/RPB1, POLR2B/RPB2 and POLR2F/RPABC2 at the base of the clamp element. The POLR2D/RPB4-POLR2G/RPB7 subcomplex seems to lock the clamp via POLR2G/RPB7 in the closed conformation thus preventing double-stranded DNA to enter the active site cleft. The POLR2D/RPB4-POLR2G/RPB7 subcomplex binds single-stranded DNA and RNA. This chain is DNA-directed RNA polymerase II subunit RPB4 (POLR2D), found in Bos taurus (Bovine).